The following is a 152-amino-acid chain: UPF0266 membrane protein PM0830 (152 aa).

The next 3 helical transmembrane spans lie at 1–21 (MMII…YAFY), 45–65 (KDAL…YTNL), and 66–86 (SSAT…AAFI).

It belongs to the UPF0266 family.

It is found in the cell inner membrane. The sequence is that of UPF0266 membrane protein PM0830 from Pasteurella multocida (strain Pm70).